Consider the following 489-residue polypeptide: COX3 mRNA-specific translational activator PET494 (489 aa).

It is found in the mitochondrion inner membrane. Its function is as follows. Required for the expression of the mitochondrial gene for cytochrome c oxidase subunit III (COX3). The polypeptide is COX3 mRNA-specific translational activator PET494 (PET494) (Saccharomyces cerevisiae (strain ATCC 204508 / S288c) (Baker's yeast)).